The following is a 1066-amino-acid chain: Thyrotropin-releasing hormone-degrading ectoenzyme (1066 aa).

The segment covering 1-14 (MALDGERGEQEEEK) has biased composition (basic and acidic residues). The segment at 1-43 (MALDGERGEQEEEKKKKKKKKKRKKKEEEGAEKSSSPFAATMG) is disordered. The Cytoplasmic segment spans residues 1 to 81 (MALDGERGEQ…ERHIAVHKRL (81 aa)). Residues 15–25 (KKKKKKKKRKK) show a composition bias toward basic residues. Thr-71 carries the post-translational modification Phosphothreonine; by PKC. A helical; Signal-anchor for type II membrane protein membrane pass occupies residues 82-102 (VLAFAVSIVALLAVTMLAVLL). Residues 103–1066 (SLRFDECGAS…FQWLGKAMRH (964 aa)) lie on the Extracellular side of the membrane. A disordered region spans residues 117 to 177 (GTDGGLGGFP…SEEEQEQWQP (61 aa)). Residues 118-127 (TDGGLGGFPE) are compositionally biased toward gly residues. An N-linked (GlcNAc...) asparagine glycan is attached at Asn-131. Residues 143 to 154 (HAGEESSQREIG) are compositionally biased toward basic and acidic residues. N-linked (GlcNAc...) asparagine glycans are attached at residues Asn-202, Asn-217, Asn-264, and Asn-380. Residue 446–450 (AAMEN) coordinates substrate. His-482 serves as a coordination point for Zn(2+). Glu-483 acts as the Proton acceptor in catalysis. Zn(2+) is bound by residues His-486 and Glu-505. Asn-647, Asn-676, Asn-691, Asn-705, Asn-726, Asn-842, and Asn-948 each carry an N-linked (GlcNAc...) asparagine glycan.

This sequence belongs to the peptidase M1 family. As to quaternary structure, homodimer; disulfide-linked. It depends on Zn(2+) as a cofactor. As to expression, predominantly expressed in brain and pituitary. Lower levels in lung and liver.

It is found in the membrane. The enzyme catalyses Release of the N-terminal pyroglutamyl group from pGlu-|-His-Xaa tripeptides and pGlu-|-His-Xaa-Gly tetrapeptides.. Functionally, specific inactivation of TRH after its release. The polypeptide is Thyrotropin-releasing hormone-degrading ectoenzyme (Trhde) (Rattus norvegicus (Rat)).